Consider the following 328-residue polypeptide: Malate dehydrogenase 1 (328 aa).

Position 12 to 18 (12 to 18 (GAAGQIG)) interacts with NAD(+). Residues Arg95 and Arg101 each coordinate substrate. Residues Asn108, Gln115, and 132-134 (VGN) each bind NAD(+). Substrate-binding residues include Asn134 and Arg165. The active-site Proton acceptor is the His190.

It belongs to the LDH/MDH superfamily. MDH type 2 family.

The catalysed reaction is (S)-malate + NAD(+) = oxaloacetate + NADH + H(+). Its function is as follows. Catalyzes the reversible oxidation of malate to oxaloacetate. In Albidiferax ferrireducens (strain ATCC BAA-621 / DSM 15236 / T118) (Rhodoferax ferrireducens), this protein is Malate dehydrogenase 1.